We begin with the raw amino-acid sequence, 205 residues long: High frequency lysogenization protein HflD homolog (205 aa).

It belongs to the HflD family.

It is found in the cytoplasm. The protein resides in the cell inner membrane. The chain is High frequency lysogenization protein HflD homolog from Vibrio campbellii (strain ATCC BAA-1116).